Here is a 197-residue protein sequence, read N- to C-terminus: MGCCTGRCSLICLCALQLVSALERQIFDFLGFQWAPILGNFLHIIVVILGLFGTIQYRPRYIMVYTVWTALWVTWNVFIICFYLEVGGLSKDTDLMTFNISVHRSWWREHGPGCVRRVLPPSAHGMMDDYTYVSVTGCIVDFQYLEVIHSAVQILLSLVGFVYACYVISISMEEEDTYSCDLQVCKHLFIQMLQIIE.

4 consecutive transmembrane segments (helical) span residues Gly2–Leu22, Ala35–Ile55, Ile62–Phe82, and Val152–Met172.

Belongs to the NKAIN family. In terms of assembly, interacts with ATP1B1.

It localises to the cell membrane. This Homo sapiens (Human) protein is Sodium/potassium-transporting ATPase subunit beta-1-interacting protein 3 (NKAIN3).